A 380-amino-acid polypeptide reads, in one-letter code: Pectinesterase QRT1 (380 aa).

An N-terminal signal peptide occupies residues 1-26 (MKVEAFIPAVLLLCFGVMLCLKSSCA). 2 N-linked (GlcNAc...) asparagine glycosylation sites follow: N74 and N137. 2 residues coordinate substrate: T164 and Q198. The Proton donor role is filled by D221. N-linked (GlcNAc...) asparagine glycosylation occurs at N227. C235 and C255 are oxidised to a cystine. D242 serves as the catalytic Nucleophile. R298 and W300 together coordinate substrate. An N-linked (GlcNAc...) asparagine glycan is attached at N302.

The protein belongs to the pectinesterase family. As to expression, expressed in flower buds, siliques, developing guard cells, floral nectares, at the stigmatic surface, in the hypocotyl-root transition zone and the area of lateral root emergence. Not expressed in mature leaves.

The protein localises to the secreted. The protein resides in the cell wall. It catalyses the reaction [(1-&gt;4)-alpha-D-galacturonosyl methyl ester](n) + n H2O = [(1-&gt;4)-alpha-D-galacturonosyl](n) + n methanol + n H(+). Its pathway is glycan metabolism; pectin degradation; 2-dehydro-3-deoxy-D-gluconate from pectin: step 1/5. Pectinesterase required for cell type-specific pectin degradation to separate microspores. This chain is Pectinesterase QRT1, found in Arabidopsis thaliana (Mouse-ear cress).